The sequence spans 156 residues: Small ribosomal subunit protein uS7 (156 aa).

It belongs to the universal ribosomal protein uS7 family. In terms of assembly, part of the 30S ribosomal subunit. Contacts proteins S9 and S11.

In terms of biological role, one of the primary rRNA binding proteins, it binds directly to 16S rRNA where it nucleates assembly of the head domain of the 30S subunit. Is located at the subunit interface close to the decoding center, probably blocks exit of the E-site tRNA. The protein is Small ribosomal subunit protein uS7 of Gloeothece citriformis (strain PCC 7424) (Cyanothece sp. (strain PCC 7424)).